A 352-amino-acid polypeptide reads, in one-letter code: MITPQQAIERLISNNELFYDEMTDLMRQIMRGQVLPEQIAAILTGLRIKVETVSEITAAAAVMREFATKVPLENAEGLVDIVGTGGDGAKTFNISTTSMFVAAAAGAKVAKHGGRSVSSSSGAADVVEQMGANLNLTPEQVAQSIRQTGIGFMFAPNHHSAMRHVAPVRRSLGFRSIFNILGPLTNPAGAPNQLLGVFHTDLCGILSRVLQQLGSKHVLVVCGEGGLDEITLTGKTRVAELKDGKISEYDIRPEDFGIETRRNLDEIKVANTQESLLKMNEVLEGREGAARDIVLLNTAAALYAGNVAASLSDGISAAREAIDSGRAKSKKEEFVGFQPQQRCHFLGKMELG.

5-phospho-alpha-D-ribose 1-diphosphate is bound by residues Gly83, 86 to 87 (GD), Thr91, 93 to 96 (NIST), 111 to 119 (KHGGRSVSS), and Ala123. Gly83 lines the anthranilate pocket. Ser95 is a binding site for Mg(2+). Residue Arg169 coordinates anthranilate. Positions 228 and 229 each coordinate Mg(2+).

This sequence belongs to the anthranilate phosphoribosyltransferase family. Homodimer. Requires Mg(2+) as cofactor.

The enzyme catalyses N-(5-phospho-beta-D-ribosyl)anthranilate + diphosphate = 5-phospho-alpha-D-ribose 1-diphosphate + anthranilate. It participates in amino-acid biosynthesis; L-tryptophan biosynthesis; L-tryptophan from chorismate: step 2/5. In terms of biological role, catalyzes the transfer of the phosphoribosyl group of 5-phosphorylribose-1-pyrophosphate (PRPP) to anthranilate to yield N-(5'-phosphoribosyl)-anthranilate (PRA). The sequence is that of Anthranilate phosphoribosyltransferase from Neisseria meningitidis serogroup A / serotype 4A (strain DSM 15465 / Z2491).